A 521-amino-acid chain; its full sequence is Apolipoprotein N-acyltransferase (521 aa).

The next 6 membrane-spanning stretches (helical) occupy residues Leu-34 to Val-54, Ala-64 to Leu-84, Leu-100 to Leu-120, Leu-137 to Phe-157, Val-176 to Ala-196, and Tyr-206 to Ala-226. In terms of domain architecture, CN hydrolase spans Ile-240–Leu-480. The Proton acceptor role is filled by Glu-281. Lys-341 is an active-site residue. The Nucleophile role is filled by Cys-392. Residues Ala-488–Ala-508 traverse the membrane as a helical segment.

It belongs to the CN hydrolase family. Apolipoprotein N-acyltransferase subfamily.

Its subcellular location is the cell inner membrane. It carries out the reaction N-terminal S-1,2-diacyl-sn-glyceryl-L-cysteinyl-[lipoprotein] + a glycerophospholipid = N-acyl-S-1,2-diacyl-sn-glyceryl-L-cysteinyl-[lipoprotein] + a 2-acyl-sn-glycero-3-phospholipid + H(+). Its pathway is protein modification; lipoprotein biosynthesis (N-acyl transfer). Its function is as follows. Catalyzes the phospholipid dependent N-acylation of the N-terminal cysteine of apolipoprotein, the last step in lipoprotein maturation. The sequence is that of Apolipoprotein N-acyltransferase from Gloeobacter violaceus (strain ATCC 29082 / PCC 7421).